We begin with the raw amino-acid sequence, 152 residues long: MSASSTAHSPLMSSEQIMNLLPHRYPFALVDRVLEHEPGKRAVAIKNITLNEPQFQGHFPGRPLMPGVLIVEAMAQVGGLIVTQMPDLPKGLFVFAGIDGVRFRRPVVPGDQLRITCELLSLKRQRFGKVRAQATVDGELVCSGELMFSLVD.

The active site involves H58.

Belongs to the thioester dehydratase family. FabZ subfamily.

It localises to the cytoplasm. It carries out the reaction a (3R)-hydroxyacyl-[ACP] = a (2E)-enoyl-[ACP] + H2O. Involved in unsaturated fatty acids biosynthesis. Catalyzes the dehydration of short chain beta-hydroxyacyl-ACPs and long chain saturated and unsaturated beta-hydroxyacyl-ACPs. In Synechococcus sp. (strain RCC307), this protein is 3-hydroxyacyl-[acyl-carrier-protein] dehydratase FabZ.